Consider the following 24-residue polypeptide: MSWTKPAYTDLRIGFEVTMYFASR.

Positions 16 to 20 (EVTMY) form a cross-link, pyrroloquinoline quinone (Glu-Tyr).

This sequence belongs to the PqqA family.

Its pathway is cofactor biosynthesis; pyrroloquinoline quinone biosynthesis. Required for coenzyme pyrroloquinoline quinone (PQQ) biosynthesis. PQQ is probably formed by cross-linking a specific glutamate to a specific tyrosine residue and excising these residues from the peptide. The sequence is that of Coenzyme PQQ synthesis protein A from Pseudomonas syringae pv. syringae (strain B728a).